Reading from the N-terminus, the 285-residue chain is Protease HtpX homolog (285 aa).

Transmembrane regions (helical) follow at residues 7–27 (TAML…MIGG) and 30–50 (GMTI…WFSD). His131 lines the Zn(2+) pocket. Residue Glu132 is part of the active site. Zn(2+) is bound at residue His135. Helical transmembrane passes span 141 to 161 (ILIS…ANFA) and 177 to 197 (IAGI…QMAI). Glu202 is a binding site for Zn(2+).

This sequence belongs to the peptidase M48B family. It depends on Zn(2+) as a cofactor.

Its subcellular location is the cell inner membrane. This chain is Protease HtpX homolog, found in Paraburkholderia phytofirmans (strain DSM 17436 / LMG 22146 / PsJN) (Burkholderia phytofirmans).